The sequence spans 101 residues: Interleukin-8 (101 aa).

The N-terminal stretch at 1–22 (MTSKLAVALLAAFLLSAALCEA) is a signal peptide. Arginine 27 bears the Citrulline mark. Cystine bridges form between cysteine 34–cysteine 61 and cysteine 36–cysteine 77.

This sequence belongs to the intercrine alpha (chemokine CxC) family. Homodimer. Interacts with TNFAIP6 (via Link domain); this interaction interferes with chemokine binding to glycosaminoglycans. Post-translationally, citrullination at Arg-27 prevents proteolysis, and dampens tissue inflammation, it also enhances leukocytosis, possibly through impaired chemokine clearance from the blood circulation.

Its subcellular location is the secreted. Its function is as follows. Chemotactic factor that mediates inflammatory response by attracting neutrophils, basophils, and T-cells to clear pathogens and protect the host from infection. Also plays an important role in neutrophil activation. Released in response to an inflammatory stimulus, exerts its effect by binding to the G-protein-coupled receptors CXCR1 and CXCR2, primarily found in neutrophils, monocytes and endothelial cells. G-protein heterotrimer (alpha, beta, gamma subunits) constitutively binds to CXCR1/CXCR2 receptor and activation by IL8 leads to beta and gamma subunits release from Galpha (GNAI2 in neutrophils) and activation of several downstream signaling pathways including PI3K and MAPK pathways. This chain is Interleukin-8 (CXCL8), found in Ovis aries (Sheep).